Consider the following 229-residue polypeptide: Cilia- and flagella-associated protein 95 (229 aa).

The Extracellular portion of the chain corresponds to Met1–Gly123. Asn75 carries N-linked (GlcNAc...) asparagine glycosylation. A helical membrane pass occupies residues Ile124–Phe140. The Cytoplasmic portion of the chain corresponds to Pro141 to Ile229. The segment at Leu153–Pro163 is mn.

As to quaternary structure, microtubule inner protein component of sperm flagellar doublet microtubules. Interacts with MYH9. Interacts with MYH10. In terms of tissue distribution, expressed in undifferentiated embryonic stem cells. Expressed in airway epithelial cells.

It localises to the cytoplasm. The protein resides in the cytoskeleton. The protein localises to the cilium axoneme. It is found in the flagellum axoneme. Its subcellular location is the cell membrane. Microtubule inner protein (MIP) part of the dynein-decorated doublet microtubules (DMTs) in cilia axoneme, which is required for motile cilia beating. This Homo sapiens (Human) protein is Cilia- and flagella-associated protein 95.